The chain runs to 216 residues: Thiopurine S-methyltransferase (216 aa).

Residues Trp-10, Leu-45, Glu-66, and Arg-123 each contribute to the S-adenosyl-L-methionine site.

The protein belongs to the class I-like SAM-binding methyltransferase superfamily. TPMT family.

It is found in the cytoplasm. It carries out the reaction S-adenosyl-L-methionine + a thiopurine = S-adenosyl-L-homocysteine + a thiopurine S-methylether.. This is Thiopurine S-methyltransferase from Pseudomonas putida (strain ATCC 47054 / DSM 6125 / CFBP 8728 / NCIMB 11950 / KT2440).